A 121-amino-acid polypeptide reads, in one-letter code: Small ribosomal subunit protein uS13 (121 aa).

Residues 92–121 (RKGLPVRGQSSKTNARTVKGPRKTVANKKK) are disordered. Residues 110–121 (KGPRKTVANKKK) show a composition bias toward basic residues.

The protein belongs to the universal ribosomal protein uS13 family. In terms of assembly, part of the 30S ribosomal subunit. Forms a loose heterodimer with protein S19. Forms two bridges to the 50S subunit in the 70S ribosome.

In terms of biological role, located at the top of the head of the 30S subunit, it contacts several helices of the 16S rRNA. In the 70S ribosome it contacts the 23S rRNA (bridge B1a) and protein L5 of the 50S subunit (bridge B1b), connecting the 2 subunits; these bridges are implicated in subunit movement. Contacts the tRNAs in the A and P-sites. In Mycoplasma capricolum subsp. capricolum (strain California kid / ATCC 27343 / NCTC 10154), this protein is Small ribosomal subunit protein uS13.